We begin with the raw amino-acid sequence, 306 residues long: MSGQYPSGYQSPSGHRGNFNSPMMQQQLNQMGVPNQMGMMGFNQGNVMQNQQQMQSGGVQSGPDIGMGQNIQQQQQPNPSQGTGQGQQQQPGQGQAQGQQQQNPQQSPQLGMAAGGQAVSSAAQSATGTVGGAPPGQPNAGPVASTQAASNVQQKEFNLLTLCRIGQETVQDIVSRFQEVFGLLRGIQPPNGTNAGLSSSNDKKAKVQEQFRTIRLLFKRLRLLYDKCNDNCQQGMEYTHVESLIPLKGEPERAEPIHTEEYKKALQENRELIEIVMLKNKQLREIIDKIRLTIWEINTMLSMRRC.

Disordered regions lie at residues 1-22 (MSGQ…FNSP) and 51-148 (QQQM…STQA). A compositionally biased stretch (low complexity) spans 51-128 (QQQMQSGGVQ…VSSAAQSATG (78 aa)).

This sequence belongs to the Mediator complex subunit 30 family. As to quaternary structure, component of the Mediator complex.

The protein localises to the nucleus. Component of the Mediator complex, a coactivator involved in the regulated transcription of nearly all RNA polymerase II-dependent genes. Mediator functions as a bridge to convey information from gene-specific regulatory proteins to the basal RNA polymerase II transcription machinery. Mediator is recruited to promoters by direct interactions with regulatory proteins and serves as a scaffold for the assembly of a functional preinitiation complex with RNA polymerase II and the general transcription factors. In Aedes aegypti (Yellowfever mosquito), this protein is Mediator of RNA polymerase II transcription subunit 30 (MED30).